The following is a 282-amino-acid chain: MNDNLKPADIVREEKAQLDFSRAMSYGDYLHLDAILGAQQPLSPAHDEMLFIIQHQTSELWMKLMLHELRAAIANVAQDELGSAFKKLARVSKIMEQLVHAWDVLATMTPPEYSAIRPYLASSSGFQSAQYRCIEFALGNKNAAMLKPHAHRPDLLALVTAAFEAPSLYDEALRLLARRGLSVPASHTERDWTQGYVENDAVESAWLTVYRDPKQYWDLYQLGEELTDLEDAFRLWRFRHVTTVERVIGFKRGTGGTGGVSYLRKMLDVVLFPEIWKLRTDL.

Residues phenylalanine 51–histidine 55, tyrosine 113, and arginine 117 contribute to the substrate site. Residue histidine 240 participates in heme binding. Residue threonine 254 coordinates substrate.

This sequence belongs to the tryptophan 2,3-dioxygenase family. Homotetramer. Heme is required as a cofactor.

The enzyme catalyses L-tryptophan + O2 = N-formyl-L-kynurenine. It functions in the pathway amino-acid degradation; L-tryptophan degradation via kynurenine pathway; L-kynurenine from L-tryptophan: step 1/2. Heme-dependent dioxygenase that catalyzes the oxidative cleavage of the L-tryptophan (L-Trp) pyrrole ring and converts L-tryptophan to N-formyl-L-kynurenine. Catalyzes the oxidative cleavage of the indole moiety. This chain is Tryptophan 2,3-dioxygenase, found in Polaromonas naphthalenivorans (strain CJ2).